Here is a 205-residue protein sequence, read N- to C-terminus: Holliday junction branch migration complex subunit RuvA (205 aa).

Positions 1–64 are domain I; that stretch reads MIGRLKGILI…ENLHQLFGFA (64 aa). A domain II region spans residues 65–143; it reads EQRDRSLFRT…NWDLPQGDML (79 aa). The tract at residues 144–153 is flexible linker; it reads AHGEIQAIAS. The domain III stretch occupies residues 153 to 205; sequence SDNDIYAEAESALIALGYKPVDAAKMVASAAKQKPEARSEELIRIALRSLAGV.

It belongs to the RuvA family. As to quaternary structure, homotetramer. Forms an RuvA(8)-RuvB(12)-Holliday junction (HJ) complex. HJ DNA is sandwiched between 2 RuvA tetramers; dsDNA enters through RuvA and exits via RuvB. An RuvB hexamer assembles on each DNA strand where it exits the tetramer. Each RuvB hexamer is contacted by two RuvA subunits (via domain III) on 2 adjacent RuvB subunits; this complex drives branch migration. In the full resolvosome a probable DNA-RuvA(4)-RuvB(12)-RuvC(2) complex forms which resolves the HJ.

It is found in the cytoplasm. In terms of biological role, the RuvA-RuvB-RuvC complex processes Holliday junction (HJ) DNA during genetic recombination and DNA repair, while the RuvA-RuvB complex plays an important role in the rescue of blocked DNA replication forks via replication fork reversal (RFR). RuvA specifically binds to HJ cruciform DNA, conferring on it an open structure. The RuvB hexamer acts as an ATP-dependent pump, pulling dsDNA into and through the RuvAB complex. HJ branch migration allows RuvC to scan DNA until it finds its consensus sequence, where it cleaves and resolves the cruciform DNA. The sequence is that of Holliday junction branch migration complex subunit RuvA from Cellvibrio japonicus (strain Ueda107) (Pseudomonas fluorescens subsp. cellulosa).